A 234-amino-acid chain; its full sequence is Segregation and condensation protein A (234 aa).

It belongs to the ScpA family. In terms of assembly, component of a cohesin-like complex composed of ScpA, ScpB and the Smc homodimer, in which ScpA and ScpB bind to the head domain of Smc. The presence of the three proteins is required for the association of the complex with DNA.

The protein localises to the cytoplasm. In terms of biological role, participates in chromosomal partition during cell division. May act via the formation of a condensin-like complex containing Smc and ScpB that pull DNA away from mid-cell into both cell halves. The protein is Segregation and condensation protein A of Streptococcus pyogenes serotype M5 (strain Manfredo).